We begin with the raw amino-acid sequence, 366 residues long: Aminomethyltransferase (366 aa).

It belongs to the GcvT family. As to quaternary structure, the glycine cleavage system is composed of four proteins: P, T, L and H.

It carries out the reaction N(6)-[(R)-S(8)-aminomethyldihydrolipoyl]-L-lysyl-[protein] + (6S)-5,6,7,8-tetrahydrofolate = N(6)-[(R)-dihydrolipoyl]-L-lysyl-[protein] + (6R)-5,10-methylene-5,6,7,8-tetrahydrofolate + NH4(+). Its function is as follows. The glycine cleavage system catalyzes the degradation of glycine. The polypeptide is Aminomethyltransferase (Bacillus cereus (strain ZK / E33L)).